We begin with the raw amino-acid sequence, 326 residues long: Flavanone 3-dioxygenase 3 (326 aa).

Residues 1 to 15 show a composition bias toward polar residues; it reads MSDTSKGIPQEQLPS. A disordered region spans residues 1-21; it reads MSDTSKGIPQEQLPSQELHPP. One can recognise a Fe2OG dioxygenase domain in the interval 175–276; sequence EGLQLLSVNC…RISLASIHGF (102 aa). Fe cation contacts are provided by His200, Asp202, and His257. 2-oxoglutarate is bound at residue Arg267.

The protein belongs to the iron/ascorbate-dependent oxidoreductase family. Requires Fe(2+) as cofactor. L-ascorbate serves as cofactor. As to expression, expressed at very low levels in roots, leaves, stems and seeds.

It carries out the reaction a (2S)-flavan-4-one + 2-oxoglutarate + O2 = a (2R,3R)-dihydroflavonol + succinate + CO2. It functions in the pathway secondary metabolite biosynthesis; flavonoid biosynthesis. In terms of biological role, catalyzes the 3-beta-hydroxylation of 2S-flavanones to 2R,3R-dihydroflavonols which are intermediates in the biosynthesis of flavonols, anthocyanidins, catechins and proanthocyanidins in plants. Converts (2S)-eriodictyol to (+)-taxifolin and (2S)-naringenin to (+)-(2R/3R)-dihydrokaempferol in vitro. The polypeptide is Flavanone 3-dioxygenase 3 (Oryza sativa subsp. japonica (Rice)).